The primary structure comprises 179 residues: Large ribosomal subunit protein uL5 (179 aa).

This sequence belongs to the universal ribosomal protein uL5 family. Part of the 50S ribosomal subunit; part of the 5S rRNA/L5/L18/L25 subcomplex. Contacts the 5S rRNA and the P site tRNA. Forms a bridge to the 30S subunit in the 70S ribosome.

Its function is as follows. This is one of the proteins that bind and probably mediate the attachment of the 5S RNA into the large ribosomal subunit, where it forms part of the central protuberance. In the 70S ribosome it contacts protein S13 of the 30S subunit (bridge B1b), connecting the 2 subunits; this bridge is implicated in subunit movement. Contacts the P site tRNA; the 5S rRNA and some of its associated proteins might help stabilize positioning of ribosome-bound tRNAs. The chain is Large ribosomal subunit protein uL5 from Shewanella frigidimarina (strain NCIMB 400).